The chain runs to 616 residues: Chaperone protein HscA homolog (616 aa).

This sequence belongs to the heat shock protein 70 family.

Chaperone involved in the maturation of iron-sulfur cluster-containing proteins. Has a low intrinsic ATPase activity which is markedly stimulated by HscB. The sequence is that of Chaperone protein HscA homolog from Aliivibrio fischeri (strain ATCC 700601 / ES114) (Vibrio fischeri).